We begin with the raw amino-acid sequence, 362 residues long: tRNA-specific 2-thiouridylase MnmA (362 aa).

ATP contacts are provided by residues 13-20 (GLSGGVDS) and M39. The segment at 99 to 101 (NPD) is interaction with target base in tRNA. Residue C104 is the Nucleophile of the active site. C104 and C200 are joined by a disulfide. G128 provides a ligand contact to ATP. Positions 150-152 (KDQ) are interaction with tRNA. C200 serves as the catalytic Cysteine persulfide intermediate.

This sequence belongs to the MnmA/TRMU family.

The protein resides in the cytoplasm. It carries out the reaction S-sulfanyl-L-cysteinyl-[protein] + uridine(34) in tRNA + AH2 + ATP = 2-thiouridine(34) in tRNA + L-cysteinyl-[protein] + A + AMP + diphosphate + H(+). Its function is as follows. Catalyzes the 2-thiolation of uridine at the wobble position (U34) of tRNA, leading to the formation of s(2)U34. The polypeptide is tRNA-specific 2-thiouridylase MnmA (Coxiella burnetii (strain RSA 493 / Nine Mile phase I)).